Here is a 235-residue protein sequence, read N- to C-terminus: Futalosine hydrolase (235 aa).

Belongs to the PNP/UDP phosphorylase family. Futalosine hydrolase subfamily.

The enzyme catalyses futalosine + H2O = dehypoxanthine futalosine + hypoxanthine. It participates in quinol/quinone metabolism; menaquinone biosynthesis. Functionally, catalyzes the hydrolysis of futalosine (FL) to dehypoxanthine futalosine (DHFL) and hypoxanthine, a step in the biosynthesis of menaquinone (MK, vitamin K2). Does not accept aminodeoxyfutalosine (AFL) as a substrate. The sequence is that of Futalosine hydrolase from Streptomyces coelicolor (strain ATCC BAA-471 / A3(2) / M145).